Reading from the N-terminus, the 182-residue chain is 3-hydroxyanthranilate 3,4-dioxygenase (182 aa).

Arg46 serves as a coordination point for O2. Fe cation is bound by residues His50, Glu56, and His96. Residue Glu56 coordinates substrate. Substrate-binding residues include Arg100 and Glu111. Fe cation is bound by residues Cys126, Cys129, Cys163, and Cys166.

The protein belongs to the 3-HAO family. In terms of assembly, homodimer. Requires Fe(2+) as cofactor.

The catalysed reaction is 3-hydroxyanthranilate + O2 = (2Z,4Z)-2-amino-3-carboxymuconate 6-semialdehyde. Its pathway is cofactor biosynthesis; NAD(+) biosynthesis; quinolinate from L-kynurenine: step 3/3. In terms of biological role, catalyzes the oxidative ring opening of 3-hydroxyanthranilate to 2-amino-3-carboxymuconate semialdehyde, which spontaneously cyclizes to quinolinate. The chain is 3-hydroxyanthranilate 3,4-dioxygenase from Brucella anthropi (strain ATCC 49188 / DSM 6882 / CCUG 24695 / JCM 21032 / LMG 3331 / NBRC 15819 / NCTC 12168 / Alc 37) (Ochrobactrum anthropi).